Here is a 359-residue protein sequence, read N- to C-terminus: POU domain, class 5, transcription factor 1B (359 aa).

2 disordered regions span residues 1–53 (MAGH…GVGP) and 87–116 (QGGLETSQPESEAGVGVESNSNGASPEPCT). The residue at position 111 (serine 111) is a Phosphoserine. The 75-residue stretch at 138-212 (DIKALQKELE…LLQKWVEEAD (75 aa)) folds into the POU-specific domain. The segment at residues 229 to 288 (ARKRKRTSIENRVRGNLENLFLQCPKPTLQISHIAQQLGLEKDVVRVWFCNRRQKGKRSS) is a DNA-binding region (homeobox). Threonine 235 is modified (phosphothreonine). Phosphoserine is present on residues serine 236, serine 288, and serine 289. The disordered stretch occupies residues 287–322 (SSSDYAQREDFEAAGSPFSGGPVSFPPAPGPHFGTP). A compositionally biased stretch (low complexity) spans 299-309 (AAGSPFSGGPV). Serine 354 is modified (phosphoserine).

Belongs to the POU transcription factor family. Class-5 subfamily. In terms of tissue distribution, detected in epithelial cells of the prostate (at protein level). Detected at the mRNA level in several cancer tissues (breast, uterine cervix, lung, thyroid gland, esophagus, colon, urinary bladder, and glioma).

It localises to the nucleus. The protein resides in the cytoplasm. Shows weak transcriptional activator activity. The chain is POU domain, class 5, transcription factor 1B (POU5F1B) from Homo sapiens (Human).